Here is a 652-residue protein sequence, read N- to C-terminus: Threonine--tRNA ligase (652 aa).

Positions 1–63 (MAEISLTFPD…TESGDFQLIT (63 aa)) constitute a TGS domain. The tract at residues 246–545 (DHRVIGRDLD…LIEMYKGAFP (300 aa)) is catalytic. Zn(2+) contacts are provided by Cys340, His391, and His522.

The protein belongs to the class-II aminoacyl-tRNA synthetase family. As to quaternary structure, homodimer. Zn(2+) serves as cofactor.

The protein resides in the cytoplasm. The catalysed reaction is tRNA(Thr) + L-threonine + ATP = L-threonyl-tRNA(Thr) + AMP + diphosphate + H(+). In terms of biological role, catalyzes the attachment of threonine to tRNA(Thr) in a two-step reaction: L-threonine is first activated by ATP to form Thr-AMP and then transferred to the acceptor end of tRNA(Thr). Also edits incorrectly charged L-seryl-tRNA(Thr). The protein is Threonine--tRNA ligase of Leuconostoc mesenteroides subsp. mesenteroides (strain ATCC 8293 / DSM 20343 / BCRC 11652 / CCM 1803 / JCM 6124 / NCDO 523 / NBRC 100496 / NCIMB 8023 / NCTC 12954 / NRRL B-1118 / 37Y).